The primary structure comprises 293 residues: Small ribosomal subunit protein uS5 (293 aa).

A disordered region spans residues 1 to 55; sequence MADDAGAAGGPGGPGGPGLGGRGGFRGGFGSGLRGRGRGRGRGRGRGRGARGGKA. Residue A2 is modified to N-acetylalanine. The span at 7–34 shows a compositional bias: gly residues; that stretch reads AAGGPGGPGGPGLGGRGGFRGGFGSGLR. 14 consecutive repeat copies span residues 9 to 11, 12 to 14, 15 to 17, 22 to 25, 26 to 29, 34 to 35, 36 to 37, 38 to 39, 40 to 41, 42 to 43, 44 to 45, 46 to 47, 48 to 49, and 51 to 52. The 3 X 3 AA tandem repeats of G-G-P stretch occupies residues 9–17; the sequence is GGPGGPGGP. The 2 X 4 AA tandem repeats of R-G-G-F stretch occupies residues 22 to 29; it reads RGGFRGGF. Residues 34–52 form a 9 X 2 AA tandem repeats of R-G region; that stretch reads RGRGRGRGRGRGRGRGARG. Residues 35 to 51 are compositionally biased toward basic residues; that stretch reads GRGRGRGRGRGRGRGAR. Residues K54 and K58 each participate in a glycyl lysine isopeptide (Lys-Gly) (interchain with G-Cter in ubiquitin) cross-link. Residues 102–165 form the S5 DRBM domain; it reads LKDEVLKIMP…ILAKLSIVPV (64 aa). Residue T252 is modified to Phosphothreonine. K263 carries the post-translational modification N6-acetyllysine. A Phosphoserine modification is found at S264. At T270 the chain carries Phosphothreonine. The residue at position 275 (K275) is an N6-acetyllysine; alternate. K275 is covalently cross-linked (Glycyl lysine isopeptide (Lys-Gly) (interchain with G-Cter in SUMO1); alternate). K275 is covalently cross-linked (Glycyl lysine isopeptide (Lys-Gly) (interchain with G-Cter in SUMO2); alternate). A Glycyl lysine isopeptide (Lys-Gly) (interchain with G-Cter in ubiquitin); alternate cross-link involves residue K275. S281 carries the post-translational modification Phosphoserine.

It belongs to the universal ribosomal protein uS5 family. In terms of assembly, component of the small ribosomal subunit. Interacts with zinc finger protein ZNF277 (via zinc-finger domains); the interaction is direct; the interaction is extra-ribosomal. Interaction with ZNF277 competes with the binding of RPS2 to protein arginine methyltransferase PRMT3. In terms of processing, citrullinated by PADI4 in the Arg/Gly-rich region. Post-translationally, asymmetric arginine dimethylation by PRMT3 occurs at multiple sites in the Arg/Gly-rich region. Monoubiquitinated at Lys-54 and Lys-58 by RNF10 when a ribosome has stalled during translation, leading to its degradation by the proteasome. Deubiquitinated at Lys-54 and Lys-58 by USP10, preventing degradation by the proteasome and promoting 40S ribosome subunit recycling following ribosome dissociation.

The protein localises to the cytoplasm. It is found in the nucleus. The protein resides in the nucleolus. Component of the ribosome, a large ribonucleoprotein complex responsible for the synthesis of proteins in the cell. The small ribosomal subunit (SSU) binds messenger RNAs (mRNAs) and translates the encoded message by selecting cognate aminoacyl-transfer RNA (tRNA) molecules. The large subunit (LSU) contains the ribosomal catalytic site termed the peptidyl transferase center (PTC), which catalyzes the formation of peptide bonds, thereby polymerizing the amino acids delivered by tRNAs into a polypeptide chain. The nascent polypeptides leave the ribosome through a tunnel in the LSU and interact with protein factors that function in enzymatic processing, targeting, and the membrane insertion of nascent chains at the exit of the ribosomal tunnel. Plays a role in the assembly and function of the 40S ribosomal subunit. Mutations in this protein affects the control of translational fidelity. Involved in nucleolar processing of pre-18S ribosomal RNA and ribosome assembly. The chain is Small ribosomal subunit protein uS5 (Rps2) from Rattus norvegicus (Rat).